Here is a 150-residue protein sequence, read N- to C-terminus: Arginine repressor (150 aa).

This sequence belongs to the ArgR family.

Its subcellular location is the cytoplasm. The protein operates within amino-acid biosynthesis; L-arginine biosynthesis [regulation]. Regulates arginine biosynthesis genes. The polypeptide is Arginine repressor (Clostridium botulinum (strain ATCC 19397 / Type A)).